Reading from the N-terminus, the 553-residue chain is Glycerol kinase 2 (553 aa).

Substrate is bound at residue Thr-20. Arg-24 is a binding site for ATP. Substrate is bound by residues Arg-94, Tyr-148, and Asp-259. ATP is bound by residues Thr-281, Gly-326, and 427–431; that span reads GMTNN. A helical membrane pass occupies residues 526-546; the sequence is IFSSLPLGFFIVSSMVMLIGA.

The protein belongs to the FGGY kinase family. As to quaternary structure, interacts with ARMC12. Interacts with PLD6. As to expression, testis-specific. Expressed in the midpiece of spermatozoa.

Its subcellular location is the mitochondrion outer membrane. The protein localises to the cytoplasm. The catalysed reaction is glycerol + ATP = sn-glycerol 3-phosphate + ADP + H(+). Its pathway is polyol metabolism; glycerol degradation via glycerol kinase pathway; sn-glycerol 3-phosphate from glycerol: step 1/1. Functionally, key enzyme in the regulation of glycerol uptake and metabolism. Essential for male fertility and sperm mitochondrial sheath formation. Required for proper arrangement of crescent-like mitochondria to form the mitochondrial sheath during spermatogenesis. Can induce mitochondrial clustering through interactions with PLD6 and up-regulation of phosphatidic acid synthesis in the mitochondria. This is Glycerol kinase 2 (GK2) from Homo sapiens (Human).